Consider the following 220-residue polypeptide: 3-keto-L-gulonate-6-phosphate decarboxylase SgbH (220 aa).

Residue aspartate 11 coordinates substrate. The Mg(2+) site is built by glutamate 33 and aspartate 62. Arginine 192 is a binding site for substrate.

Belongs to the HPS/KGPDC family. KGPDC subfamily. In terms of assembly, homodimer. Mg(2+) serves as cofactor.

It catalyses the reaction 3-dehydro-L-gulonate 6-phosphate + H(+) = L-xylulose 5-phosphate + CO2. Functionally, catalyzes the decarboxylation of 3-keto-L-gulonate-6-P into L-xylulose-5-P. May be involved in the utilization of 2,3-diketo-L-gulonate. The sequence is that of 3-keto-L-gulonate-6-phosphate decarboxylase SgbH (sgbH) from Escherichia coli (strain K12).